A 310-amino-acid chain; its full sequence is MSRKKMGLLVMAYGTPYKEEDIERYYTHIRRGRKPEPEMLQDLKDRYEAIGGISPLAQITEQQAHNLEQHLNEIQDEITFKAYIGLKHIEPFIEDAVAEMHKDGITEAVSIVLAPHFSTFSVQSYNKRAKEEAEKLGGLTITSVESWYDEPKFVTYWVDRVKETYASMPEDERENAMLIVSAHSLPEKIKEFGDPYPDQLHESAKLIAEGAGVSEYAVGWQSEGNTPDPWLGPDVQDLTRDLFEQKGYQAFVYVPVGFVADHLEVLYDNDYECKVVTDDIGASYYRPEMPNAKPEFIDALATVVLKKLGR.

Y13 serves as a coordination point for Fe-coproporphyrin III. Residue Y13 participates in N-methylmesoporphyrin binding. E20 is a binding site for Mg(2+). Residue R30 coordinates Fe-coproporphyrin III. R31–R33 serves as a coordination point for N-methylmesoporphyrin. Position 46 (R46) interacts with Mg(2+). Fe-coproporphyrin III is bound by residues R46 to Y47, S54, and Y125. N-methylmesoporphyrin-binding residues include H183 and K188. H183 lines the Fe(2+) pocket. E264 serves as a coordination point for Fe(2+). Residues D268 and E272 each coordinate Mg(2+).

The protein belongs to the ferrochelatase family. As to quaternary structure, monomer. Interacts with frataxin/Fra.

The protein resides in the cytoplasm. The enzyme catalyses Fe-coproporphyrin III + 2 H(+) = coproporphyrin III + Fe(2+). It functions in the pathway porphyrin-containing compound metabolism; protoheme biosynthesis. Stimulated by Mg(2+). Inhibited by Cd(2+). Inhibited by N-methylmesoporphyrin (N-MeMP) and 2,4-disulfonic acid deuteroporphyrin IX (dSDP). Involved in coproporphyrin-dependent heme b biosynthesis. Catalyzes the insertion of ferrous iron into coproporphyrin III to form Fe-coproporphyrin III. It can also insert iron into protoporphyrin IX. Has weaker activity with 2,4 disulfonate, deuteroporphyrin and 2,4 hydroxyethyl. In vitro, can also use Zn(2+) or Cu(2+). This is Coproporphyrin III ferrochelatase from Bacillus subtilis (strain 168).